The primary structure comprises 480 residues: Aspartyl/glutamyl-tRNA(Asn/Gln) amidotransferase subunit B (480 aa).

Belongs to the GatB/GatE family. GatB subfamily. As to quaternary structure, heterotrimer of A, B and C subunits.

It carries out the reaction L-glutamyl-tRNA(Gln) + L-glutamine + ATP + H2O = L-glutaminyl-tRNA(Gln) + L-glutamate + ADP + phosphate + H(+). The catalysed reaction is L-aspartyl-tRNA(Asn) + L-glutamine + ATP + H2O = L-asparaginyl-tRNA(Asn) + L-glutamate + ADP + phosphate + 2 H(+). Its function is as follows. Allows the formation of correctly charged Asn-tRNA(Asn) or Gln-tRNA(Gln) through the transamidation of misacylated Asp-tRNA(Asn) or Glu-tRNA(Gln) in organisms which lack either or both of asparaginyl-tRNA or glutaminyl-tRNA synthetases. The reaction takes place in the presence of glutamine and ATP through an activated phospho-Asp-tRNA(Asn) or phospho-Glu-tRNA(Gln). This is Aspartyl/glutamyl-tRNA(Asn/Gln) amidotransferase subunit B from Caldicellulosiruptor bescii (strain ATCC BAA-1888 / DSM 6725 / KCTC 15123 / Z-1320) (Anaerocellum thermophilum).